A 73-amino-acid chain; its full sequence is DNA gyrase inhibitor YacG (73 aa).

The Zn(2+) site is built by cysteine 12, cysteine 15, cysteine 31, and cysteine 35. Residues 47–73 (DYAIPGEPIDPAEPSEDRNGAEGPPTD) are disordered.

It belongs to the DNA gyrase inhibitor YacG family. In terms of assembly, interacts with GyrB. Requires Zn(2+) as cofactor.

Its function is as follows. Inhibits all the catalytic activities of DNA gyrase by preventing its interaction with DNA. Acts by binding directly to the C-terminal domain of GyrB, which probably disrupts DNA binding by the gyrase. The polypeptide is DNA gyrase inhibitor YacG (Methylococcus capsulatus (strain ATCC 33009 / NCIMB 11132 / Bath)).